Consider the following 140-residue polypeptide: Nucleoside diphosphate kinase (140 aa).

Positions 11, 59, 87, 93, 104, and 114 each coordinate ATP. The active-site Pros-phosphohistidine intermediate is the histidine 117.

The protein belongs to the NDK family. In terms of assembly, homotetramer. Mg(2+) serves as cofactor.

It is found in the cytoplasm. It carries out the reaction a 2'-deoxyribonucleoside 5'-diphosphate + ATP = a 2'-deoxyribonucleoside 5'-triphosphate + ADP. The catalysed reaction is a ribonucleoside 5'-diphosphate + ATP = a ribonucleoside 5'-triphosphate + ADP. Its function is as follows. Major role in the synthesis of nucleoside triphosphates other than ATP. The ATP gamma phosphate is transferred to the NDP beta phosphate via a ping-pong mechanism, using a phosphorylated active-site intermediate. In Dinoroseobacter shibae (strain DSM 16493 / NCIMB 14021 / DFL 12), this protein is Nucleoside diphosphate kinase.